Reading from the N-terminus, the 310-residue chain is 4-hydroxythreonine-4-phosphate dehydrogenase (310 aa).

His126 and Thr127 together coordinate substrate. A divalent metal cation-binding residues include His156, His195, and His251. The substrate site is built by Lys259, Asn268, and Arg277.

It belongs to the PdxA family. Homodimer. Requires Zn(2+) as cofactor. The cofactor is Mg(2+). It depends on Co(2+) as a cofactor.

It is found in the cytoplasm. The enzyme catalyses 4-(phosphooxy)-L-threonine + NAD(+) = 3-amino-2-oxopropyl phosphate + CO2 + NADH. It functions in the pathway cofactor biosynthesis; pyridoxine 5'-phosphate biosynthesis; pyridoxine 5'-phosphate from D-erythrose 4-phosphate: step 4/5. Its function is as follows. Catalyzes the NAD(P)-dependent oxidation of 4-(phosphooxy)-L-threonine (HTP) into 2-amino-3-oxo-4-(phosphooxy)butyric acid which spontaneously decarboxylates to form 3-amino-2-oxopropyl phosphate (AHAP). This Helicobacter acinonychis (strain Sheeba) protein is 4-hydroxythreonine-4-phosphate dehydrogenase.